Here is a 101-residue protein sequence, read N- to C-terminus: Conantokin-L (101 aa).

Positions 1 to 21 (MQLYTYLYLLVPLVTFHLILG) are cleaved as a signal peptide. Positions 22-80 (TGTLDHGGALTERRSTDAIALKPEPVLLQKSSARSTDDNGNDRLTQMKRILKKRGNKAR) are excised as a propeptide. A 4-carboxyglutamate mark is found at Glu83, Glu84, Glu91, and Glu95. Residues Glu91 and Glu95 each contribute to the a divalent metal cation site. An Asparagine amide modification is found at Asn99.

This sequence belongs to the conotoxin B superfamily. Ca(2+) serves as cofactor. The cofactor is Mg(2+). In terms of tissue distribution, expressed by the venom duct.

Its subcellular location is the secreted. Functionally, conantokins inhibit N-methyl-D-aspartate (NMDA) receptors. This toxin is far less potent as an anticonvulsant compound than conantokin-R. It induces sleep-like symptoms in mice. The chain is Conantokin-L from Conus lynceus (Lynceus cone).